Consider the following 442-residue polypeptide: 3-phosphoshikimate 1-carboxyvinyltransferase (442 aa).

3-phosphoshikimate-binding residues include lysine 25, serine 26, and arginine 30. Lysine 25 provides a ligand contact to phosphoenolpyruvate. Glycine 96 and arginine 124 together coordinate phosphoenolpyruvate. Serine 171, serine 172, glutamine 173, serine 203, aspartate 325, and lysine 352 together coordinate 3-phosphoshikimate. Residue glutamine 173 coordinates phosphoenolpyruvate. Residue aspartate 325 is the Proton acceptor of the active site. The phosphoenolpyruvate site is built by arginine 356, arginine 400, and lysine 425.

The protein belongs to the EPSP synthase family. In terms of assembly, monomer.

It localises to the cytoplasm. It carries out the reaction 3-phosphoshikimate + phosphoenolpyruvate = 5-O-(1-carboxyvinyl)-3-phosphoshikimate + phosphate. Its pathway is metabolic intermediate biosynthesis; chorismate biosynthesis; chorismate from D-erythrose 4-phosphate and phosphoenolpyruvate: step 6/7. In terms of biological role, catalyzes the transfer of the enolpyruvyl moiety of phosphoenolpyruvate (PEP) to the 5-hydroxyl of shikimate-3-phosphate (S3P) to produce enolpyruvyl shikimate-3-phosphate and inorganic phosphate. In Bordetella pertussis (strain Tohama I / ATCC BAA-589 / NCTC 13251), this protein is 3-phosphoshikimate 1-carboxyvinyltransferase.